A 491-amino-acid polypeptide reads, in one-letter code: Glutamyl-tRNA(Gln) amidotransferase subunit A (491 aa).

Catalysis depends on charge relay system residues Lys-81 and Ser-156. Residue Ser-180 is the Acyl-ester intermediate of the active site.

This sequence belongs to the amidase family. GatA subfamily. As to quaternary structure, heterotrimer of A, B and C subunits.

The catalysed reaction is L-glutamyl-tRNA(Gln) + L-glutamine + ATP + H2O = L-glutaminyl-tRNA(Gln) + L-glutamate + ADP + phosphate + H(+). Allows the formation of correctly charged Gln-tRNA(Gln) through the transamidation of misacylated Glu-tRNA(Gln) in organisms which lack glutaminyl-tRNA synthetase. The reaction takes place in the presence of glutamine and ATP through an activated gamma-phospho-Glu-tRNA(Gln). The protein is Glutamyl-tRNA(Gln) amidotransferase subunit A of Alcanivorax borkumensis (strain ATCC 700651 / DSM 11573 / NCIMB 13689 / SK2).